A 333-amino-acid polypeptide reads, in one-letter code: B3 domain-containing transcription factor NGA4 (333 aa).

Residues 36–145 constitute a DNA-binding region (TF-B3); sequence FDKVLTPSDV…KIMFIDWRPR (110 aa). The tract at residues 268–333 is disordered; it reads VEESSSSGDT…YKRKGKSLEL (66 aa). Residues 323-333 are compositionally biased toward basic and acidic residues; that stretch reads EYKRKGKSLEL.

The protein localises to the nucleus. Functionally, regulates lateral organ growth. Functionally redundant with NGA1, NGA2 and NGA3. This Arabidopsis thaliana (Mouse-ear cress) protein is B3 domain-containing transcription factor NGA4 (NGA4).